A 65-amino-acid chain; its full sequence is Small ribosomal subunit protein eS27 (65 aa).

Residues cysteine 20, cysteine 23, cysteine 39, and cysteine 42 each contribute to the Zn(2+) site. The segment at 20–42 adopts a C4-type zinc-finger fold; sequence CIDCGNEQIVFSNPATTVRCLVC.

This sequence belongs to the eukaryotic ribosomal protein eS27 family. Part of the 30S ribosomal subunit. Requires Zn(2+) as cofactor.

The chain is Small ribosomal subunit protein eS27 from Thermococcus onnurineus (strain NA1).